The primary structure comprises 409 residues: Pentatricopeptide repeat-containing protein At1g31790 (409 aa).

PPR repeat units lie at residues 87–121 (NEDI…SIRP), 122–152 (TITF…MPHR), 153–187 (DFHS…SQKG), 192–226 (PSWI…GFID), 229–259 (DSYL…LSNA), 260–294 (NTVA…GIKK), 295–330 (NVSV…GFES), 331–361 (DCLI…SKDE), and 363–397 (SVSC…GIKA).

The protein belongs to the PPR family. PCMP-A subfamily.

The chain is Pentatricopeptide repeat-containing protein At1g31790 (PCMP-A1) from Arabidopsis thaliana (Mouse-ear cress).